The following is a 276-amino-acid chain: Undecaprenyl-diphosphatase (276 aa).

A run of 7 helical transmembrane segments spans residues 42–62, 88–108, 116–136, 149–169, 187–207, 222–242, and 253–273; these read AVTA…IVYF, ALLG…GYLG, LRSL…IVYA, MRLP…VPGV, VAAT…AGIF, SLVV…AWLL, and FVWY…TGLV.

Belongs to the UppP family.

It is found in the cell membrane. The enzyme catalyses di-trans,octa-cis-undecaprenyl diphosphate + H2O = di-trans,octa-cis-undecaprenyl phosphate + phosphate + H(+). Its function is as follows. Catalyzes the dephosphorylation of undecaprenyl diphosphate (UPP). Confers resistance to bacitracin. The sequence is that of Undecaprenyl-diphosphatase from Acidothermus cellulolyticus (strain ATCC 43068 / DSM 8971 / 11B).